Consider the following 152-residue polypeptide: Deoxyuridine 5'-triphosphate nucleotidohydrolase (152 aa).

Substrate contacts are provided by residues 72-74 (RSG), N85, and 89-91 (TVD).

Belongs to the dUTPase family. It depends on Mg(2+) as a cofactor.

The catalysed reaction is dUTP + H2O = dUMP + diphosphate + H(+). The protein operates within pyrimidine metabolism; dUMP biosynthesis; dUMP from dCTP (dUTP route): step 2/2. In terms of biological role, this enzyme is involved in nucleotide metabolism: it produces dUMP, the immediate precursor of thymidine nucleotides and it decreases the intracellular concentration of dUTP so that uracil cannot be incorporated into DNA. In Nitrobacter winogradskyi (strain ATCC 25391 / DSM 10237 / CIP 104748 / NCIMB 11846 / Nb-255), this protein is Deoxyuridine 5'-triphosphate nucleotidohydrolase.